A 338-amino-acid chain; its full sequence is Putative ankyrin repeat protein CBU_0781 (338 aa).

The interval 1–31 (MSRRETPTSTISSTPTGTRTPRRRLSRKGHP) is disordered. The segment covering 7–19 (PTSTISSTPTGTR) has biased composition (low complexity). The segment covering 20 to 31 (TPRRRLSRKGHP) has biased composition (basic residues). ANK repeat units lie at residues 92 to 124 (QGDT…IVNK) and 125 to 157 (LGET…IKYK). The stretch at 197-242 (SQIMASDKEIDEIIRNARNLQIIKKEKREAEERARTKKSKQITLQR) forms a coiled coil. The tract at residues 319-338 (KKEDTTLSRNNSLSCLSSPR) is disordered. Residues 325-338 (LSRNNSLSCLSSPR) are compositionally biased toward low complexity.

This Coxiella burnetii (strain RSA 493 / Nine Mile phase I) protein is Putative ankyrin repeat protein CBU_0781.